The primary structure comprises 443 residues: C4-dicarboxylate transport protein (443 aa).

9 consecutive transmembrane segments (helical) span residues serine 10–proline 30, leucine 46–methionine 66, tyrosine 78–valine 98, isoleucine 143–glycine 163, proline 199–valine 219, leucine 224–cysteine 244, valine 291–leucine 311, isoleucine 332–glycine 352, and isoleucine 354–isoleucine 374.

The protein belongs to the dicarboxylate/amino acid:cation symporter (DAACS) (TC 2.A.23) family.

The protein resides in the cell inner membrane. Its function is as follows. Responsible for the transport of dicarboxylates such as succinate, fumarate, and malate from the periplasm across the membrane. This Pseudomonas fluorescens (strain SBW25) protein is C4-dicarboxylate transport protein.